The following is a 343-amino-acid chain: L-threonine 3-dehydrogenase (343 aa).

Zn(2+) is bound at residue Cys40. Residues Thr42 and His45 each act as charge relay system in the active site. 6 residues coordinate Zn(2+): His65, Glu66, Cys95, Cys98, Cys101, and Cys109. NAD(+) is bound by residues Ile177, Asp197, Arg202, 264-266 (LGI), and 288-289 (IY).

Belongs to the zinc-containing alcohol dehydrogenase family. As to quaternary structure, homotetramer. The cofactor is Zn(2+).

It is found in the cytoplasm. The enzyme catalyses L-threonine + NAD(+) = (2S)-2-amino-3-oxobutanoate + NADH + H(+). It functions in the pathway amino-acid degradation; L-threonine degradation via oxydo-reductase pathway; glycine from L-threonine: step 1/2. Catalyzes the NAD(+)-dependent oxidation of L-threonine to 2-amino-3-ketobutyrate. This is L-threonine 3-dehydrogenase from Aliivibrio salmonicida (strain LFI1238) (Vibrio salmonicida (strain LFI1238)).